The chain runs to 482 residues: Thymidine phosphorylase (482 aa).

Positions 1-10 are excised as a propeptide; it reads MAALMTPGTG. The interval 1–36 is disordered; that stretch reads MAALMTPGTGAPPAPGDFSGEGSQGLPDPSPEPKQL. Threonine 6 carries the post-translational modification Phosphothreonine. 4 residues coordinate substrate: histidine 116, arginine 202, serine 217, and lysine 221. 2 R-V-A-A-A-L-X(5,6)-L-G-R repeats span residues 265–279 and 329–342; these read RVAA…PLGR and RVAA…ALGR. R-A-L-X-X-A-L-V-L repeat units follow at residues 393–401 and 453–461; these read RALPLALVL and RALQEALVL.

The protein belongs to the thymidine/pyrimidine-nucleoside phosphorylase family. As to quaternary structure, homodimer.

It carries out the reaction thymidine + phosphate = 2-deoxy-alpha-D-ribose 1-phosphate + thymine. It functions in the pathway pyrimidine metabolism; dTMP biosynthesis via salvage pathway; dTMP from thymine: step 1/2. Its function is as follows. May have a role in maintaining the integrity of the blood vessels. Has growth promoting activity on endothelial cells, angiogenic activity in vivo and chemotactic activity on endothelial cells in vitro. Functionally, catalyzes the reversible phosphorolysis of thymidine. The produced molecules are then utilized as carbon and energy sources or in the rescue of pyrimidine bases for nucleotide synthesis. The chain is Thymidine phosphorylase from Homo sapiens (Human).